We begin with the raw amino-acid sequence, 522 residues long: Lysine--tRNA ligase (522 aa).

The 'HIGH' region motif lies at 44 to 52; it reads PSGLPHIGT. Positions 290-294 match the 'KMSKS' region motif; that stretch reads KISKS. Lysine 293 contributes to the ATP binding site.

This sequence belongs to the class-I aminoacyl-tRNA synthetase family.

It is found in the cytoplasm. It catalyses the reaction tRNA(Lys) + L-lysine + ATP = L-lysyl-tRNA(Lys) + AMP + diphosphate. The sequence is that of Lysine--tRNA ligase from Rickettsia africae (strain ESF-5).